The following is a 65-amino-acid chain: uncharacterized protein (65 aa).

This is an uncharacterized protein from Rhizobium fredii (Sinorhizobium fredii).